Here is a 224-residue protein sequence, read N- to C-terminus: Biotin transport ATP-binding protein BioM (224 aa).

Positions 3–224 (IQFESAGVSF…AIARYREIAA (222 aa)) constitute an ABC transporter domain. 34–41 (GLNGSGKT) serves as a coordination point for ATP.

It belongs to the ABC transporter superfamily. Part of a biotin transporter complex composed of BioM, BioN and BioY.

The protein localises to the cell inner membrane. In terms of biological role, involved in biotin uptake. The polypeptide is Biotin transport ATP-binding protein BioM (bioM) (Rhizobium etli (strain ATCC 51251 / DSM 11541 / JCM 21823 / NBRC 15573 / CFN 42)).